Here is a 93-residue protein sequence, read N- to C-terminus: UPF0147 protein MM_1385 (93 aa).

It belongs to the UPF0147 family.

The polypeptide is UPF0147 protein MM_1385 (Methanosarcina mazei (strain ATCC BAA-159 / DSM 3647 / Goe1 / Go1 / JCM 11833 / OCM 88) (Methanosarcina frisia)).